An 813-amino-acid polypeptide reads, in one-letter code: Lon protease (813 aa).

The Lon N-terminal domain maps to 14 to 207; sequence LPLLPLRGII…ILTEILAREM (194 aa). An ATP-binding site is contributed by 359–366; it reads GPPGVGKT. Residues 595–776 form the Lon proteolytic domain; sequence ESQVGVATGL…DQVIREALLE (182 aa). Residues Ser682 and Lys725 contribute to the active site.

Belongs to the peptidase S16 family. In terms of assembly, homohexamer. Organized in a ring with a central cavity.

The protein resides in the cytoplasm. The enzyme catalyses Hydrolysis of proteins in presence of ATP.. In terms of biological role, ATP-dependent serine protease that mediates the selective degradation of mutant and abnormal proteins as well as certain short-lived regulatory proteins. Required for cellular homeostasis and for survival from DNA damage and developmental changes induced by stress. Degrades polypeptides processively to yield small peptide fragments that are 5 to 10 amino acids long. Binds to DNA in a double-stranded, site-specific manner. This is Lon protease from Heliobacterium modesticaldum (strain ATCC 51547 / Ice1).